Consider the following 179-residue polypeptide: Large ribosomal subunit protein uL5 (179 aa).

It belongs to the universal ribosomal protein uL5 family. As to quaternary structure, part of the 50S ribosomal subunit; part of the 5S rRNA/L5/L18/L25 subcomplex. Contacts the 5S rRNA and the P site tRNA. Forms a bridge to the 30S subunit in the 70S ribosome.

In terms of biological role, this is one of the proteins that bind and probably mediate the attachment of the 5S RNA into the large ribosomal subunit, where it forms part of the central protuberance. In the 70S ribosome it contacts protein S13 of the 30S subunit (bridge B1b), connecting the 2 subunits; this bridge is implicated in subunit movement. Contacts the P site tRNA; the 5S rRNA and some of its associated proteins might help stabilize positioning of ribosome-bound tRNAs. This chain is Large ribosomal subunit protein uL5, found in Lawsonia intracellularis (strain PHE/MN1-00).